A 906-amino-acid chain; its full sequence is Translation initiation factor IF-2 (906 aa).

Disordered regions lie at residues 134 to 250 (RQRN…GSHV) and 269 to 317 (HLSA…FERP). Over residues 136-177 (RNLDEQQRLAESDRVRDEEIQRKRDEEQAAKDRAEAERKAAE) the composition is skewed to basic and acidic residues. Composition is skewed to low complexity over residues 178–232 (EAAA…STPA) and 287–305 (GRPG…RGSN). Positions 405–574 (TRPPVVTIMG…SLQAEVLELK (170 aa)) constitute a tr-type G domain. The interval 414–421 (GHVDHGKT) is G1. 414-421 (GHVDHGKT) lines the GTP pocket. The G2 stretch occupies residues 439–443 (GITQH). A G3 region spans residues 460–463 (DTPG). GTP contacts are provided by residues 460–464 (DTPGH) and 514–517 (NKID). The interval 514 to 517 (NKID) is G4. Positions 550–552 (SAK) are G5.

Belongs to the TRAFAC class translation factor GTPase superfamily. Classic translation factor GTPase family. IF-2 subfamily.

The protein localises to the cytoplasm. Functionally, one of the essential components for the initiation of protein synthesis. Protects formylmethionyl-tRNA from spontaneous hydrolysis and promotes its binding to the 30S ribosomal subunits. Also involved in the hydrolysis of GTP during the formation of the 70S ribosomal complex. The sequence is that of Translation initiation factor IF-2 from Xanthomonas oryzae pv. oryzae (strain MAFF 311018).